Consider the following 283-residue polypeptide: Pantothenate synthetase (283 aa).

30–37 (MGNLHDGH) lines the ATP pocket. The Proton donor role is filled by His37. A (R)-pantoate-binding site is contributed by Gln61. A beta-alanine-binding site is contributed by Gln61. ATP is bound at residue 149–152 (GEKD). Gln155 contributes to the (R)-pantoate binding site. 186–189 (LSSR) is a binding site for ATP.

It belongs to the pantothenate synthetase family. Homodimer.

The protein resides in the cytoplasm. The enzyme catalyses (R)-pantoate + beta-alanine + ATP = (R)-pantothenate + AMP + diphosphate + H(+). The protein operates within cofactor biosynthesis; (R)-pantothenate biosynthesis; (R)-pantothenate from (R)-pantoate and beta-alanine: step 1/1. Functionally, catalyzes the condensation of pantoate with beta-alanine in an ATP-dependent reaction via a pantoyl-adenylate intermediate. The polypeptide is Pantothenate synthetase (Escherichia coli O6:H1 (strain CFT073 / ATCC 700928 / UPEC)).